Consider the following 515-residue polypeptide: Membrane-bound transcription factor site-2 protease (515 aa).

The Cytoplasmic portion of the chain corresponds to 1-3 (MIP). The helical transmembrane segment at 4–24 (VSLLVVVVGGWTAVYLADLVL) threads the bilayer. Residues 25–74 (KSSVYFKHSYEDWLENNGLSISPFHIRWQTSIFNRAFYSWGRRKARMLYQ) are Lumenal-facing. A run of 2 helical transmembrane segments spans residues 75 to 95 (WFNFGMVFGVIAMFSSFFLLG) and 96 to 107 (KTLMQTLAQMMA). The Lumenal segment spans residues 108–140 (DSPSPYSSSSSSSSSSSSSSSSSSSLHNEQVLQ). Residues 141–165 (VVVPGINLPVNQLTYFFAAVLISGV) traverse the membrane as a helical segment. His167 contributes to the Zn(2+) binding site. Glu168 is a catalytic residue. 3 helical membrane-spanning segments follow: residues 170-182 (GHGIAAIREQVRF), 183-205 (NGFGIFLFIIYPGAFVDLFTTHL), and 225-247 (FVLALLGILALVLLPVILLPFYY). His171 contacts Zn(2+). At 248-442 (TGVGVLITEV…LPVIVETFVK (195 aa)) the chain is on the lumenal side. An N-linked (GlcNAc...) asparagine glycan is attached at Asn333. 2 consecutive transmembrane segments (helical) span residues 443–460 (YLISLSGALAIVNAVPCF) and 461–472 (ALDGQWILNSFL). Over 473-488 (DATLTSVIGDNDVKDL) the chain is Lumenal. The chain crosses the membrane as a helical span at residues 489–509 (IGFFILLGGSVLLAANVTLGL). Topologically, residues 510-515 (WMVTAR) are cytoplasmic.

It belongs to the peptidase M50A family. It depends on Zn(2+) as a cofactor.

Its subcellular location is the membrane. It localises to the cytoplasm. The protein localises to the golgi apparatus membrane. It carries out the reaction Cleaves several transcription factors that are type-2 transmembrane proteins within membrane-spanning domains. Known substrates include sterol regulatory element-binding protein (SREBP) -1, SREBP-2 and forms of the transcriptional activator ATF6. SREBP-2 is cleaved at the site 477-DRSRILL-|-CVLTFLCLSFNPLTSLLQWGGA-505. The residues Asn-Pro, 11 residues distal to the site of cleavage in the membrane-spanning domain, are important for cleavage by S2P endopeptidase. Replacement of either of these residues does not prevent cleavage, but there is no cleavage if both of these residues are replaced.. In terms of biological role, zinc metalloprotease that mediates intramembrane proteolysis of proteins such as ATF6, ATF6B, SREBF1/SREBP1 and SREBF2/SREBP2. Catalyzes the second step in the proteolytic activation of the sterol regulatory element-binding proteins (SREBPs) SREBF1/SREBP1 and SREBF2/SREBP2: cleaves SREBPs within the first transmembrane segment, thereby releasing the N-terminal segment with a portion of the transmembrane segment attached. Mature N-terminal SREBP fragments shuttle to the nucleus and activate gene transcription. Also mediates the second step in the proteolytic activation of the cyclic AMP-dependent transcription factor ATF-6 (ATF6 and ATF6B). Involved in intramembrane proteolysis during bone formation. In astrocytes and osteoblasts, upon DNA damage and ER stress, mediates the second step of the regulated intramembrane proteolytic activation of the transcription factor CREB3L1, leading to the inhibition of cell-cycle progression. In Mus musculus (Mouse), this protein is Membrane-bound transcription factor site-2 protease (Mbtps2).